We begin with the raw amino-acid sequence, 87 residues long: Putative regulatory protein BCG9842_B1272 (87 aa).

It belongs to the RemA family.

This is Putative regulatory protein BCG9842_B1272 from Bacillus cereus (strain G9842).